The chain runs to 388 residues: MGNLTSAQPAGCKIVETLPATLPLALPAGSMLTYDCFDTLISQTQSELCIASYCCNLRSTPEGGHVLLRLLELARANVRVTIIVDEQSRDADATQLAGVPNLRYLKMDVGELPGGKPGSLLSSFWVSDKRRFYLGSASLTGGSISTIKSLGVYSECAPLARDLRRRFRDYERLCARRCLRCLSLSTRFHLRRRCGDAFFSDAPESLIGSTRTFDADAVLAHVQAARSTIDMELLSLVPLVRDEDSVKYWPRMHDALVRAALERNVRLRLLVGLWHRSDVFSLAAVKGLHELGVGHADISVRVFAIPGAKGDAINNTKLLVVDDEYVHVSNADIDGTHYARHAFVSFNCAERTFARALGALFERDWQSSFSSPLPRALPPEPATLLSVN.

The N-myristoyl glycine; by host moiety is linked to residue Gly-2. One can recognise a PLD phosphodiesterase domain in the interval 310–337; it reads GDAINNTKLLVVDDEYVHVSNADIDGTH.

It localises to the virion membrane. Its subcellular location is the host endoplasmic reticulum membrane. Functionally, envelope protein associated with the inner side of the enveloped virion (EV) membrane. The sequence is that of Envelope protein F13 homolog (P43K) from Molluscum contagiosum virus subtype 2 (MOCV).